A 344-amino-acid polypeptide reads, in one-letter code: MSNAITMGIFWHLIGAASAACFYAPFKKVKKWSWETMWSVGGIVSWIILPWAISALLLPNFWAYYSSFSLSTLLPVFLFGAMCGIGNINYGLTMRYLGMSMGIGIAIGITLIVGTLMTPIINGNFDVLISTEGGRMTLLGVLVALIGVGIVTRAGQLKERKMGIKAEEFNLKKGLVLAVMCGIFSAGMSFAMNAAKPMHEAAAALGVDPLYVALPSYVVIMGGGAIINLGFCFIRLAKVKDLSLKADFSLAKSLIIHNVLLSTLGGLMWYLQFFFYAWGHARIPAQYDYISWMLHMSFYVLCGGIVGLVLKEWNNAGRRPVTVLSLGCVVIIVAANIVGIGMAN.

Helical transmembrane passes span 4-24 (AITMGIFWHLIGAASAACFYA), 38-58 (WSVGGIVSWIILPWAISALLL), 68-88 (FSLSTLLPVFLFGAMCGIGNI), 101-121 (MGIGIAIGITLIVGTLMTPII), 137-157 (TLLGVLVALIGVGIVTRAGQL), 175-195 (LVLAVMCGIFSAGMSFAMNAA), 214-234 (LPSYVVIMGGGAIINLGFCFI), 259-279 (VLLSTLGGLMWYLQFFFYAWG), 290-310 (ISWMLHMSFYVLCGGIVGLVL), and 323-343 (VLSLGCVVIIVAANIVGIGMA).

Belongs to the L-rhamnose transporter (TC 2.A.7.6) family.

It is found in the cell inner membrane. It catalyses the reaction L-rhamnopyranose(in) + H(+)(in) = L-rhamnopyranose(out) + H(+)(out). Functionally, uptake of L-rhamnose across the cytoplasmic membrane with the concomitant transport of protons into the cell (symport system). In Escherichia coli O9:H4 (strain HS), this protein is L-rhamnose-proton symporter.